The sequence spans 136 residues: uncharacterized protein (136 aa).

A helical transmembrane segment spans residues 19-39; sequence LGFPLGTALLLIIIFSLSGIF. Disordered stretches follow at residues 54 to 87 and 112 to 136; these read SLANGRPSADIESNPYKPKPPFPEMKKPQNLSVP and KLTVDVQTPPQSPPVKPARFPVPLY.

Its subcellular location is the membrane. This is an uncharacterized protein from Arabidopsis thaliana (Mouse-ear cress).